The primary structure comprises 291 residues: Taste receptor type 2 member 16 (291 aa).

Met1 is a topological domain (extracellular). Residues 2–22 form a helical membrane-spanning segment; it reads IPIQLTVFFMIIYVLESLTII. The Cytoplasmic portion of the chain corresponds to 23-41; the sequence is VQSSLIVAVLGREWLQVRR. A helical membrane pass occupies residues 42 to 62; that stretch reads LMPVDMILISLGISRFCLQWA. At 63 to 84 the chain is on the extracellular side; the sequence is SMLNNFCSYFNLNYVLCNLTIT. N-linked (GlcNAc...) asparagine glycosylation occurs at Asn80. Residues 85 to 105 form a helical membrane-spanning segment; sequence WEFFNILTFWLNSLLTVFYCI. Over 106–125 the chain is Cytoplasmic; it reads KVSSFTHHIFLWLRWRILRL. The helical transmembrane segment at 126 to 146 threads the bilayer; it reads FPWILLGSLMITCVTIIPSAI. Residues 147–182 lie on the Extracellular side of the membrane; that stretch reads GNYIQIQLLTMEHLPRNSTVTDKLEKFHQYQFQAHT. N-linked (GlcNAc...) asparagine glycosylation occurs at Asn163. The helical transmembrane segment at 183 to 203 threads the bilayer; it reads VALVIPFILFLASTILLMASL. Topologically, residues 204 to 228 are cytoplasmic; that stretch reads TKQIQHHSTGHCNPSMKAHFTALRS. Residues 229–249 traverse the membrane as a helical segment; that stretch reads LAVLFIVFTSYFLTILITIIG. At 250–257 the chain is on the extracellular side; it reads TLFDKRCW. The chain crosses the membrane as a helical span at residues 258–278; the sequence is LWVWEAFVYAFILMHSTSLML. Residues 279–291 lie on the Cytoplasmic side of the membrane; it reads SSPTLKRILKGKC.

Belongs to the G-protein coupled receptor T2R family. Interacts with RTP3 and RTP4.

The protein resides in the cell membrane. Its function is as follows. Receptor that may play a role in the perception of bitterness and is gustducin-linked. May play a role in sensing the chemical composition of the gastrointestinal content. The activity of this receptor may stimulate alpha gustducin, mediate PLC-beta-2 activation and lead to the gating of TRPM5. The protein is Taste receptor type 2 member 16 (TAS2R16) of Pan troglodytes (Chimpanzee).